Consider the following 139-residue polypeptide: Large-conductance mechanosensitive channel (139 aa).

2 helical membrane-spanning segments follow: residues 14–34 (VIDL…INSL) and 81–101 (GSFL…FMIV).

The protein belongs to the MscL family. Homopentamer.

It localises to the cell membrane. Channel that opens in response to stretch forces in the membrane lipid bilayer. May participate in the regulation of osmotic pressure changes within the cell. This Chloroflexus aurantiacus (strain ATCC 29366 / DSM 635 / J-10-fl) protein is Large-conductance mechanosensitive channel.